Reading from the N-terminus, the 214-residue chain is MVFFPWWISLLFNKGLESWVTNWWNTTHSETFLTDMQEKSILDKFIELEELLLLDEMINEYPETHLQTLRIGIHKEMVRLIKMRNEDHIHTILHLSTNIICFIIFRGYSILGNKELLILNSWMQEFLYNLSDTIKAFSILLLTDFCIGFHSPHGWELMIAYVYKDFGFAQNDQIISGLVSTFPVILDTIFKYWIFRYLNRVSPSLVVIYDSMND.

2 helical membrane passes run 92–112 and 174–194; these read ILHL…SILG and IISG…KYWI.

It belongs to the CemA family.

It localises to the plastid. The protein localises to the chloroplast inner membrane. It carries out the reaction K(+)(in) + H(+)(out) = K(+)(out) + H(+)(in). In terms of biological role, contributes to K(+)/H(+) antiport activity by supporting proton efflux to control proton extrusion and homeostasis in chloroplasts in a light-dependent manner to modulate photosynthesis. Prevents excessive induction of non-photochemical quenching (NPQ) under continuous-light conditions. Indirectly promotes efficient inorganic carbon uptake into chloroplasts. The chain is Potassium/proton antiporter CemA from Oenothera argillicola (Appalachian evening primrose).